The chain runs to 251 residues: L,D-transpeptidase 1 (251 aa).

A signal peptide spans 1–28 (MRRVVRYLSVVVAITLMLTAESVSIATA). Residues 125–250 (LIGVASISAH…VTVGDPIEVV (126 aa)) form the L,D-TPase catalytic domain. Residues Tyr190 and 203 to 204 (SG) contribute to the substrate site. The active-site Proton donor/acceptor is the His208. Catalysis depends on Cys226, which acts as the Nucleophile. Asn228 is a substrate binding site.

Monomer.

The protein localises to the periplasm. It functions in the pathway cell wall biogenesis; peptidoglycan biosynthesis. With respect to regulation, is irreversibly inactivated by the beta-lactams carbapenems via the formation of a covalent adduct resulting from acylation of the catalytic Cys. Its function is as follows. Generates 3-&gt;3 cross-links in peptidoglycan, catalyzing the cleavage of the mDap(3)-D-Ala(4) bond of a tetrapeptide donor stem and the formation of a bond between the carbonyl of mDap(3) of the donor stem and the side chain of mDap(3) of the acceptor stem. Is specific for donor substrates containing a stem tetrapeptide since it cannot use pentapeptide stems. The polypeptide is L,D-transpeptidase 1 (ldtA) (Mycobacterium tuberculosis (strain CDC 1551 / Oshkosh)).